The following is a 265-amino-acid chain: Thymidine kinase 2, mitochondrial (265 aa).

Residues 1 to 33 constitute a mitochondrion transit peptide; the sequence is MLLWPLRGWAARALRCFGPGSRGSPASGPGPRR. Positions 20-32 are enriched in low complexity; sequence GSRGSPASGPGPR. Residues 20–47 are disordered; it reads GSRGSPASGPGPRRVQRRAWPPDKEQEK. An ATP-binding site is contributed by 57–65; it reads GNIASGKTT. Glu-133 functions as the Proton acceptor in the catalytic mechanism.

It belongs to the DCK/DGK family. In terms of assembly, monomer. As to expression, predominantly expressed in liver, pancreas, muscle, and brain.

The protein localises to the mitochondrion. The enzyme catalyses thymidine + ATP = dTMP + ADP + H(+). The catalysed reaction is 2'-deoxycytidine + ATP = dCMP + ADP + H(+). It carries out the reaction 2'-deoxyuridine + ATP = dUMP + ADP + H(+). Phosphorylates thymidine, deoxycytidine, and deoxyuridine in the mitochondrial matrix. In non-replicating cells, where cytosolic dNTP synthesis is down-regulated, mtDNA synthesis depends solely on TK2 and DGUOK. Widely used as target of antiviral and chemotherapeutic agents. The chain is Thymidine kinase 2, mitochondrial from Homo sapiens (Human).